A 213-amino-acid chain; its full sequence is StAR-related lipid transfer protein 5 (213 aa).

The START domain occupies 1–213; it reads MDLATAAQVS…LEKAVKKFFG (213 aa).

Functionally, may be involved in the intracellular transport of sterols or other lipids. May bind cholesterol or other sterols. The chain is StAR-related lipid transfer protein 5 (STARD5) from Bos taurus (Bovine).